The chain runs to 142 residues: Hemoglobin subunit alpha-A (142 aa).

The Globin domain maps to 2-142 (VLSPTDKSIV…VSTVLTSKYR (141 aa)). Residue His-59 participates in O2 binding. His-88 contacts heme b.

It belongs to the globin family. In terms of assembly, heterotetramer of two alpha chains and two beta chains. In terms of tissue distribution, red blood cells.

Involved in oxygen transport from the lung to the various peripheral tissues. The protein is Hemoglobin subunit alpha-A (HBAA) of Otolemur crassicaudatus (Brown greater galago).